The chain runs to 269 residues: Large ribosomal subunit protein uL3m (269 aa).

The transit peptide at Met1–Tyr19 directs the protein to the mitochondrion.

This sequence belongs to the universal ribosomal protein uL3 family. As to quaternary structure, component of the mitochondrial large ribosomal subunit (mt-LSU). Mature yeast 74S mitochondrial ribosomes consist of a small (37S) and a large (54S) subunit. The 37S small subunit contains a 15S ribosomal RNA (15S mt-rRNA) and 34 different proteins. The 54S large subunit contains a 21S rRNA (21S mt-rRNA) and 46 different proteins.

The protein localises to the mitochondrion. Functionally, component of the mitochondrial ribosome (mitoribosome), a dedicated translation machinery responsible for the synthesis of mitochondrial genome-encoded proteins, including at least some of the essential transmembrane subunits of the mitochondrial respiratory chain. The mitoribosomes are attached to the mitochondrial inner membrane and translation products are cotranslationally integrated into the membrane. This is Large ribosomal subunit protein uL3m (MRPL9) from Saccharomyces cerevisiae (strain ATCC 204508 / S288c) (Baker's yeast).